The chain runs to 147 residues: Large ribosomal subunit protein uL13 (147 aa).

The protein belongs to the universal ribosomal protein uL13 family. Part of the 50S ribosomal subunit.

Its function is as follows. This protein is one of the early assembly proteins of the 50S ribosomal subunit, although it is not seen to bind rRNA by itself. It is important during the early stages of 50S assembly. This Mycolicibacterium gilvum (strain PYR-GCK) (Mycobacterium gilvum (strain PYR-GCK)) protein is Large ribosomal subunit protein uL13.